The sequence spans 299 residues: Pantothenate synthetase (299 aa).

Residue 41–48 (MGALHEGH) coordinates ATP. His48 serves as the catalytic Proton donor. Gln72 lines the (R)-pantoate pocket. Position 72 (Gln72) interacts with beta-alanine. Residue 158–161 (GQKD) participates in ATP binding. Gln164 is a (R)-pantoate binding site. Residues Val187 and 195–198 (MSSR) each bind ATP.

This sequence belongs to the pantothenate synthetase family. Homodimer.

Its subcellular location is the cytoplasm. It carries out the reaction (R)-pantoate + beta-alanine + ATP = (R)-pantothenate + AMP + diphosphate + H(+). It functions in the pathway cofactor biosynthesis; (R)-pantothenate biosynthesis; (R)-pantothenate from (R)-pantoate and beta-alanine: step 1/1. Functionally, catalyzes the condensation of pantoate with beta-alanine in an ATP-dependent reaction via a pantoyl-adenylate intermediate. The protein is Pantothenate synthetase of Acidobacterium capsulatum (strain ATCC 51196 / DSM 11244 / BCRC 80197 / JCM 7670 / NBRC 15755 / NCIMB 13165 / 161).